The chain runs to 123 residues: Protein Wnt-3a (123 aa).

A lipid anchor (O-palmitoleoyl serine) is attached at Ser1. Cys89 and Cys104 are oxidised to a cystine. N-linked (GlcNAc...) asparagine glycosylation is present at Asn90.

The protein belongs to the Wnt family. Post-translationally, disulfide bonds have critical and distinct roles in secretion and activity. Loss of each conserved cysteine results in high molecular weight oxidized Wnt oligomers, which are formed through inter-Wnt disulfide bonding. In terms of processing, palmitoleoylation is required for efficient binding to frizzled receptors. Depalmitoleoylation leads to Wnt signaling pathway inhibition.

It localises to the secreted. It is found in the extracellular space. Its subcellular location is the extracellular matrix. Its function is as follows. Ligand for members of the frizzled family of seven transmembrane receptors. Functions in the canonical Wnt signaling pathway that results in activation of transcription factors of the TCF/LEF family. Required for normal embryonic mesoderm development and formation of caudal somites. Required for normal morphogenesis of the developing neural tube. The sequence is that of Protein Wnt-3a (WNT-3A) from Pituophis melanoleucus (Pine snake).